A 76-amino-acid chain; its full sequence is UPF0291 protein BC_1827 (76 aa).

This sequence belongs to the UPF0291 family.

Its subcellular location is the cytoplasm. The sequence is that of UPF0291 protein BC_1827 from Bacillus cereus (strain ATCC 14579 / DSM 31 / CCUG 7414 / JCM 2152 / NBRC 15305 / NCIMB 9373 / NCTC 2599 / NRRL B-3711).